Reading from the N-terminus, the 203-residue chain is MNLQNKILKGTTTVGIKVKDGVVLAADRRASAGYYVAHKYVRKVLYVTDNIGITTAGSVADLQFIYEALKYIYHRNSITGEGPITVKGIATWLANVLSSSKYFPYLVQILIGGVDDQPRLYNLDYLGDITEEEYTATGSGSPEALGVLEDNYKPEMSLDEAAELAKRAIFSSIKRDSFTGTGVIVTKITKNGHEEKEYYITKR.

A propeptide spans 1–10 (MNLQNKILKG) (removed in mature form; by autocatalysis). Thr-11 acts as the Nucleophile in catalysis.

This sequence belongs to the peptidase T1B family. In terms of assembly, the 20S proteasome core is composed of 14 alpha and 14 beta subunits that assemble into four stacked heptameric rings, resulting in a barrel-shaped structure. The two inner rings, each composed of seven catalytic beta subunits, are sandwiched by two outer rings, each composed of seven alpha subunits. The catalytic chamber with the active sites is on the inside of the barrel. Has a gated structure, the ends of the cylinder being occluded by the N-termini of the alpha-subunits. Is capped at one or both ends by the proteasome regulatory ATPase, PAN.

It localises to the cytoplasm. The catalysed reaction is Cleavage of peptide bonds with very broad specificity.. With respect to regulation, the formation of the proteasomal ATPase PAN-20S proteasome complex, via the docking of the C-termini of PAN into the intersubunit pockets in the alpha-rings, triggers opening of the gate for substrate entry. Interconversion between the open-gate and close-gate conformations leads to a dynamic regulation of the 20S proteasome proteolysis activity. Its function is as follows. Component of the proteasome core, a large protease complex with broad specificity involved in protein degradation. This is Proteasome subunit beta 2 from Sulfolobus acidocaldarius (strain ATCC 33909 / DSM 639 / JCM 8929 / NBRC 15157 / NCIMB 11770).